The sequence spans 240 residues: 6-carboxyhexanoate--CoA ligase (240 aa).

This sequence belongs to the BioW family. As to quaternary structure, homodimer. Mg(2+) is required as a cofactor.

The catalysed reaction is heptanedioate + ATP + CoA = 6-carboxyhexanoyl-CoA + AMP + diphosphate. It functions in the pathway metabolic intermediate metabolism; pimeloyl-CoA biosynthesis; pimeloyl-CoA from pimelate: step 1/1. In terms of biological role, catalyzes the transformation of pimelate into pimeloyl-CoA with concomitant hydrolysis of ATP to AMP. The chain is 6-carboxyhexanoate--CoA ligase from Aquifex aeolicus (strain VF5).